The sequence spans 505 residues: MYQLFCFLAGIIVVYKAAQYYKRRTLVTKFHCKPARISPNKSWLEYLGIASVVHADEMIRKGGLYSEIDGRFKSLDVSTFKSITLGKTTYVTKDIENIRHILSATEMNSWNLGARPIALRPFIGDGIFASEGQSWKHSRIMLRPVFAKEHVKQITSMEPYVQLLIKIIKNHEGEPLEFQTLAHLFTIDYSTDFLLGESCDSLKDFLGEESNSTLDTSLRLAFASQFNKTQQQMTIRFMLGKLAFLMYPKSFQYSIQMQKDFVDVYIDRVVGMSEEELNNHPKSYVLLYQLARQTKNRDILQDELMSILLAGRDTTASLLTFLFFELSHHPEVFNKLKEEIERHFPDVESVTFGTIQRCDYLQWCINETMRLHPSVPFNFRTAANDTVIPRGGGKSCTDPILVHKGEQVLFSFYSVNREEKYFGTNTDKFAPERWSESLRRTEFIPFSAGPRACLGQQLPRVEASYVTIRLLQTFHGLHNASKQYPPNRVVAATMRLTDGCNVCFI.

A helical membrane pass occupies residues 4–21 (LFCFLAGIIVVYKAAQYY). Cys453 contacts heme.

The protein belongs to the cytochrome P450 family. It depends on heme as a cofactor.

It localises to the membrane. In terms of biological role, together with an NADPH cytochrome P450 the enzyme system catalyzes the terminal hydroxylation as the first step in the assimilation of alkanes and fatty acids. The chain is Cytochrome P450 52C1 (CYP52C1) from Candida tropicalis (Yeast).